We begin with the raw amino-acid sequence, 559 residues long: MAASKKAVLGPLVGAVDQGTSSTRFLVFNSKTAELLSHHQVEIKQEFPREGWVEQDPKEILHSVYECIEKTCEKLGQLNIDISNIKAIGVSNQRETTVVWDKITGEPLYNAVVWLDLRTQSTVESLSKRIPGNNNFVKSKTGLPLSTYFSAVKLRWLLDNVRKVQKAVEEKRALFGTIDSWLIWSLTGGVNGGVHCTDVTNASRTMLFNIHSLEWDKQLCEFFGIPMEILPNVRSSSEIYGLMKISHSVKAGALEGVPISGCLGDQSAALVGQMCFQIGQAKNTYGTGCFLLCNTGHKCVFSDHGLLTTVAYKLGRDKPVYYALEGSVAIAGAVIRWLRDNLGIIKTSEEIEKLAKEVGTSYGCYFVPAFSGLYAPYWEPSARGIICGLTQFTNKCHIAFAALEAVCFQTREILDAMNRDCGIPLSHLQVDGGMTSNKILMQLQADILYIPVVKPSMPETTALGAAMAAGAAEGVGVWSLEPEDLSAVTMERFEPQINAEESEIRYSTWKKAVMKSMGWVTTQSPESGDPSIFCSLPLGFFIVSSMVMLIGARYISGIP.

Thr20 is a binding site for ADP. 3 residues coordinate ATP: Thr20, Ser21, and Ser22. Residue Thr20 coordinates sn-glycerol 3-phosphate. Arg24 is an ADP binding site. Sn-glycerol 3-phosphate is bound by residues Arg94, Glu95, and Tyr148. Positions 94, 95, and 148 each coordinate glycerol. Gly252 contributes to the beta-D-fructose 1,6-bisphosphate binding site. Residue Asp265 participates in sn-glycerol 3-phosphate binding. 2 residues coordinate glycerol: Asp265 and Gln266. The ADP site is built by Thr287, Gly332, Gly433, and Asn437. The ATP site is built by Thr287, Gly332, and Gly433. Residues 532–552 (IFCSLPLGFFIVSSMVMLIGA) traverse the membrane as a helical segment.

This sequence belongs to the FGGY kinase family. Widely expressed in fetal and adult tissues. As to expression, the sole isoform expressed in adult liver and kidney.

Its subcellular location is the mitochondrion outer membrane. The protein localises to the nucleus. It localises to the cytoplasm. It is found in the cytosol. The enzyme catalyses glycerol + ATP = sn-glycerol 3-phosphate + ADP + H(+). Its pathway is polyol metabolism; glycerol degradation via glycerol kinase pathway; sn-glycerol 3-phosphate from glycerol: step 1/1. Potassium and magnesium-dependent. In terms of biological role, kinase that plays a key role in glycerol metabolism, catalyzing its phosphorylation to produce sn-glycerol 3-phosphate. Sn-glycerol 3-phosphate is a crucial intermediate in various metabolic pathways, such as the synthesis of glycerolipids and triglycerides, glycogenesis, glycolysis and gluconeogenesis. This is Glycerol kinase from Homo sapiens (Human).